A 70-amino-acid polypeptide reads, in one-letter code: Protein SlyX homolog (70 aa).

The protein belongs to the SlyX family.

This chain is Protein SlyX homolog, found in Shewanella sp. (strain MR-7).